Consider the following 439-residue polypeptide: Serine hydroxymethyltransferase (439 aa).

126-128 serves as a coordination point for (6S)-5,6,7,8-tetrahydrofolate; the sequence is AHV. Lysine 232 carries the post-translational modification N6-(pyridoxal phosphate)lysine.

The protein belongs to the SHMT family. In terms of assembly, homodimer. The cofactor is pyridoxal 5'-phosphate.

Its subcellular location is the cytoplasm. It participates in amino-acid biosynthesis; glycine biosynthesis; glycine from L-serine: step 1/1. Functionally, catalyzes the reversible interconversion of serine and glycine with a modified folate serving as the one-carbon carrier. Also exhibits a pteridine-independent aldolase activity toward beta-hydroxyamino acids, producing glycine and aldehydes, via a retro-aldol mechanism. The sequence is that of Serine hydroxymethyltransferase from Staphylothermus marinus (strain ATCC 43588 / DSM 3639 / JCM 9404 / F1).